The primary structure comprises 730 residues: Jacalin-related lectin 5 (730 aa).

Residues 1 to 126 (MSWDDGKHTK…LNSIDAHFAP (126 aa)) form the Jacalin-type lectin 1 domain. Residues 121–450 (DAHFAPAPPP…GNQWDDGTDH (330 aa)) form a disordered region. 4 stretches are compositionally biased toward low complexity: residues 138–153 (GASG…GSAG), 168–179 (AGGSKPSSGSAG), 196–207 (AGGSKPSSGSAG), and 248–261 (TEKN…SSGS). Positions 275–307 (ETVSNIGDTESNAGGSKSNDGANNGASGIESNA) are enriched in polar residues. Over residues 314–323 (FGAGGTGGIG) the composition is skewed to gly residues. The span at 343–358 (DGASGIGSNDGSTGTN) shows a compositional bias: low complexity. 2 stretches are compositionally biased toward polar residues: residues 366-375 (DSNIEGTENN) and 388-416 (IGNS…TGGK). Residues 417–429 (ESNTGSESNTNSS) show a composition bias toward low complexity. Jacalin-type lectin domains lie at 430 to 572 (PQKL…YFVP) and 584 to 727 (PNKV…YFIP).

It belongs to the jacalin lectin family.

The polypeptide is Jacalin-related lectin 5 (JAL5) (Arabidopsis thaliana (Mouse-ear cress)).